We begin with the raw amino-acid sequence, 147 residues long: Large ribosomal subunit protein uL16 (147 aa).

This sequence belongs to the universal ribosomal protein uL16 family. As to quaternary structure, part of the 50S ribosomal subunit.

In terms of biological role, binds 23S rRNA and is also seen to make contacts with the A and possibly P site tRNAs. This is Large ribosomal subunit protein uL16 from Clostridium novyi (strain NT).